The following is a 1024-amino-acid chain: Error-prone DNA polymerase (1024 aa).

Belongs to the DNA polymerase type-C family. DnaE2 subfamily.

The protein localises to the cytoplasm. It catalyses the reaction DNA(n) + a 2'-deoxyribonucleoside 5'-triphosphate = DNA(n+1) + diphosphate. Its function is as follows. DNA polymerase involved in damage-induced mutagenesis and translesion synthesis (TLS). It is not the major replicative DNA polymerase. The chain is Error-prone DNA polymerase from Vibrio parahaemolyticus serotype O3:K6 (strain RIMD 2210633).